Here is a 440-residue protein sequence, read N- to C-terminus: Gamma-aminobutyric acid receptor subunit pi (440 aa).

The first 23 residues, 1–23 (MSYSLYLAFVCLNLLAQRMCIQG), serve as a signal peptide directing secretion. Over 24–241 (NQFNVEVSRS…LVLQFELRRN (218 aa)) the chain is Extracellular. Residues Asn43, Asn102, and Asn145 are each glycosylated (N-linked (GlcNAc...) asparagine). Cys160 and Cys174 form a disulfide bridge. Residues Asn196 and Asn228 are each glycosylated (N-linked (GlcNAc...) asparagine). The helical transmembrane segment at 242–262 (VLYFILETYVPSTFLVVLSWV) threads the bilayer. Residues 263 to 270 (SFWISLES) are Cytoplasmic-facing. The chain crosses the membrane as a helical span at residues 271–290 (VPARTCIGVTTVLSMTTLMI). At 291–301 (GSRTSLPNTNC) the chain is on the extracellular side. Residues 302–322 (FIKAIDVYLGICFSFVFGALL) form a helical membrane-spanning segment. The Cytoplasmic segment spans residues 323-419 (EYAVAHYSSL…NPSNVDRYSK (97 aa)). The chain crosses the membrane as a helical span at residues 420-440 (LLFPLIFMLANVFYWAYYMYF).

The protein belongs to the ligand-gated ion channel (TC 1.A.9) family. Gamma-aminobutyric acid receptor (TC 1.A.9.5) subfamily. GABRP sub-subfamily. In terms of assembly, heteropentamer, formed by a combination of alpha (GABRA1-6), beta (GABRB1-3), gamma (GABRG1-3), delta (GABRD), epsilon (GABRE), rho (GABRR1-3), pi (GABRP) and theta (GABRQ) chains, each subunit exhibiting distinct physiological and pharmacological properties. As to expression, expressed in lungs, in alveolar epithelium.

The protein resides in the cell membrane. The protein localises to the apical cell membrane. It carries out the reaction chloride(in) = chloride(out). In terms of biological role, pi subunit of the heteropentameric ligand-gated chloride channel gated by gamma-aminobutyric acid (GABA). GABA-gated chloride channels, also named GABA(A) receptors (GABAAR), consist of five subunits arranged around a central pore and contain GABA active binding site(s) located at the alpha and beta subunit interfaces. When activated by GABA, GABAARs selectively allow the flow of chloride anions across the cell membrane down their electrochemical gradient. Pi-containing GABAARs are mostly located in peripheral tissues. In the uterus, pi subunits modulate uterus contraction by altering the sensitivity of GABAARs to pregnanolone. In the lungs, pi-containing GABAARs contribute to pulmonary fluid transport via luminal secretion of chloride. The chain is Gamma-aminobutyric acid receptor subunit pi from Rattus norvegicus (Rat).